The primary structure comprises 396 residues: D-alanine--D-alanine ligase (396 aa).

Residues Lys141–Ser347 enclose the ATP-grasp domain. Residue Glu174–Glu229 participates in ATP binding. Mg(2+) is bound by residues Asp301, Glu314, and Asn316. Residues Ala374–Ala396 are disordered.

The protein belongs to the D-alanine--D-alanine ligase family. Mg(2+) is required as a cofactor. The cofactor is Mn(2+).

The protein localises to the cytoplasm. The catalysed reaction is 2 D-alanine + ATP = D-alanyl-D-alanine + ADP + phosphate + H(+). It participates in cell wall biogenesis; peptidoglycan biosynthesis. Cell wall formation. The protein is D-alanine--D-alanine ligase of Treponema pallidum (strain Nichols).